We begin with the raw amino-acid sequence, 414 residues long: Glutathione gamma-glutamylcysteinyltransferase (414 aa).

Residues 37-256 (QLKKSFYKRQ…GYVLLEPMHI (220 aa)) form the Peptidase C83 domain.

It belongs to the phytochelatin synthase family.

It carries out the reaction [Glu(-Cys)](n)-Gly + glutathione + H(+) = [Glu(-Cys)](n+1)-Gly + glycine. Functionally, required for detoxification of heavy metals such as cadmium and arsenate. The polypeptide is Glutathione gamma-glutamylcysteinyltransferase (Schizosaccharomyces pombe (strain 972 / ATCC 24843) (Fission yeast)).